Consider the following 279-residue polypeptide: DegV domain-containing protein SP_1112 (279 aa).

The region spanning Ile4–Tyr277 is the DegV domain. Residues Thr62 and Ser94 each contribute to the hexadecanoate site.

Its function is as follows. May bind long-chain fatty acids, such as palmitate, and may play a role in lipid transport or fatty acid metabolism. The chain is DegV domain-containing protein SP_1112 from Streptococcus pneumoniae serotype 4 (strain ATCC BAA-334 / TIGR4).